Consider the following 573-residue polypeptide: Mitochondrial distribution and morphology protein 34 (573 aa).

Positions 1 to 195 (MAFNFNWSPL…LPAIIHRLSL (195 aa)) constitute an SMP-LTD domain. Disordered regions lie at residues 301–326 (EGLG…SSPL), 349–433 (FSGY…RFPN), 499–521 (SREK…ITDA), and 550–573 (LVNN…AYGQ). Low complexity predominate over residues 306–316 (GLMSPGSPALS). The span at 360–373 (RHTKARPTKKRKKR) shows a compositional bias: basic residues. The span at 374–385 (VVDLRKQSKPTD) shows a compositional bias: basic and acidic residues. The segment covering 396-409 (TETSTASTTFSSST) has biased composition (low complexity).

The protein belongs to the MDM34 family. As to quaternary structure, component of the ER-mitochondria encounter structure (ERMES) or MDM complex, composed of MMM1, MDM10, MDM12 and MDM34.

It localises to the mitochondrion outer membrane. Functionally, component of the ERMES/MDM complex, which serves as a molecular tether to connect the endoplasmic reticulum (ER) and mitochondria. Components of this complex are involved in the control of mitochondrial shape and protein biogenesis, and function in nonvesicular lipid trafficking between the ER and mitochondria. MDM34 is required for the interaction of the ER-resident membrane protein MMM1 and the outer mitochondrial membrane-resident beta-barrel protein MDM10. The polypeptide is Mitochondrial distribution and morphology protein 34 (Uncinocarpus reesii (strain UAMH 1704)).